Here is a 238-residue protein sequence, read N- to C-terminus: Purine nucleoside phosphorylase DeoD-type (238 aa).

His4 contacts a purine D-ribonucleoside. Phosphate contacts are provided by residues Gly20, Arg24, Arg43, and 87 to 90 (RVGS). Residues 179–181 (EME) and 203–204 (SD) each bind a purine D-ribonucleoside. The active-site Proton donor is Asp204.

Belongs to the PNP/UDP phosphorylase family. Homohexamer; trimer of homodimers.

It catalyses the reaction a purine D-ribonucleoside + phosphate = a purine nucleobase + alpha-D-ribose 1-phosphate. It carries out the reaction a purine 2'-deoxy-D-ribonucleoside + phosphate = a purine nucleobase + 2-deoxy-alpha-D-ribose 1-phosphate. In terms of biological role, catalyzes the reversible phosphorolytic breakdown of the N-glycosidic bond in the beta-(deoxy)ribonucleoside molecules, with the formation of the corresponding free purine bases and pentose-1-phosphate. The polypeptide is Purine nucleoside phosphorylase DeoD-type (Haemophilus ducreyi (strain 35000HP / ATCC 700724)).